The sequence spans 494 residues: NADH-quinone oxidoreductase subunit N (494 aa).

14 helical membrane passes run 9 to 29, 36 to 56, 73 to 93, 107 to 127, 131 to 151, 166 to 186, 209 to 229, 241 to 261, 278 to 298, 304 to 324, 339 to 359, 382 to 402, 416 to 436, and 469 to 489; these read VIPE…DLFL, LTYV…LSDF, PMSN…LVYS, LGGE…VMMS, FLII…LVAF, FVLG…LYGA, LIFG…AVPF, PTAV…AITI, MLTI…IMQT, LAYS…SGVV, MFYV…IMLL, FAFV…VVGF, GQIW…FYYL, and ALLA…AAII.

Belongs to the complex I subunit 2 family. As to quaternary structure, NDH-1 is composed of 14 different subunits. Subunits NuoA, H, J, K, L, M, N constitute the membrane sector of the complex.

Its subcellular location is the cell inner membrane. The enzyme catalyses a quinone + NADH + 5 H(+)(in) = a quinol + NAD(+) + 4 H(+)(out). Its function is as follows. NDH-1 shuttles electrons from NADH, via FMN and iron-sulfur (Fe-S) centers, to quinones in the respiratory chain. The immediate electron acceptor for the enzyme in this species is believed to be ubiquinone. Couples the redox reaction to proton translocation (for every two electrons transferred, four hydrogen ions are translocated across the cytoplasmic membrane), and thus conserves the redox energy in a proton gradient. This chain is NADH-quinone oxidoreductase subunit N, found in Herminiimonas arsenicoxydans.